The sequence spans 360 residues: Protein RecA (360 aa).

69–76 (GPESSGKT) contributes to the ATP binding site.

The protein belongs to the RecA family.

Its subcellular location is the cytoplasm. Functionally, can catalyze the hydrolysis of ATP in the presence of single-stranded DNA, the ATP-dependent uptake of single-stranded DNA by duplex DNA, and the ATP-dependent hybridization of homologous single-stranded DNAs. It interacts with LexA causing its activation and leading to its autocatalytic cleavage. The sequence is that of Protein RecA from Trichodesmium erythraeum (strain IMS101).